The chain runs to 401 residues: L-rhamnonate dehydratase (401 aa).

Residues histidine 29 and arginine 55 each coordinate substrate. Residues aspartate 222, glutamate 248, and glutamate 276 each contribute to the Mg(2+) site. Histidine 325 functions as the Proton acceptor in the catalytic mechanism. Glutamate 345 lines the substrate pocket.

The protein belongs to the mandelate racemase/muconate lactonizing enzyme family. RhamD subfamily. Homooctamer; tetramer of dimers. Mg(2+) is required as a cofactor.

It carries out the reaction L-rhamnonate = 2-dehydro-3-deoxy-L-rhamnonate + H2O. Its function is as follows. Catalyzes the dehydration of L-rhamnonate to 2-keto-3-deoxy-L-rhamnonate (KDR). The chain is L-rhamnonate dehydratase from Escherichia coli O157:H7.